The following is a 348-amino-acid chain: Sulfate/thiosulfate import ATP-binding protein CysA (348 aa).

The region spanning 3-237 (IRIQELRKQF…PSSPFVYSFV (235 aa)) is the ABC transporter domain. 35–42 (GPSGSGKT) is a binding site for ATP.

Belongs to the ABC transporter superfamily. Sulfate/tungstate importer (TC 3.A.1.6) family. The complex is composed of two ATP-binding proteins (CysA), two transmembrane proteins (CysT and CysW) and a solute-binding protein (CysP).

The protein localises to the cell inner membrane. The enzyme catalyses sulfate(out) + ATP + H2O = sulfate(in) + ADP + phosphate + H(+). It catalyses the reaction thiosulfate(out) + ATP + H2O = thiosulfate(in) + ADP + phosphate + H(+). Part of the ABC transporter complex CysAWTP involved in sulfate/thiosulfate import. Responsible for energy coupling to the transport system. The polypeptide is Sulfate/thiosulfate import ATP-binding protein CysA (Xylella fastidiosa (strain Temecula1 / ATCC 700964)).